The sequence spans 714 residues: DNA ligase (714 aa).

Residues 48-52 (DADYD), 97-98 (SL), and glutamate 129 contribute to the NAD(+) site. Lysine 131 acts as the N6-AMP-lysine intermediate in catalysis. Positions 152, 189, 307, and 331 each coordinate NAD(+). Residues cysteine 436, cysteine 439, cysteine 454, and cysteine 460 each contribute to the Zn(2+) site. The BRCT domain maps to 637 to 714 (KQDTAVAGKT…TEDEWLALIG (78 aa)).

The protein belongs to the NAD-dependent DNA ligase family. LigA subfamily. Mg(2+) serves as cofactor. It depends on Mn(2+) as a cofactor.

It catalyses the reaction NAD(+) + (deoxyribonucleotide)n-3'-hydroxyl + 5'-phospho-(deoxyribonucleotide)m = (deoxyribonucleotide)n+m + AMP + beta-nicotinamide D-nucleotide.. Functionally, DNA ligase that catalyzes the formation of phosphodiester linkages between 5'-phosphoryl and 3'-hydroxyl groups in double-stranded DNA using NAD as a coenzyme and as the energy source for the reaction. It is essential for DNA replication and repair of damaged DNA. This chain is DNA ligase, found in Rhodopseudomonas palustris (strain BisB5).